The primary structure comprises 310 residues: Ninja-family protein 3 (310 aa).

Disordered stretches follow at residues 1 to 29 (MASR…GEPD), 68 to 140 (SLPG…DDAQ), and 156 to 215 (DQGN…EQPP). Residues 99-108 (ERWRRREMQS) are compositionally biased toward basic and acidic residues. 2 stretches are compositionally biased toward polar residues: residues 156–166 (DQGNASSSMPE) and 176–193 (KSTS…QNKS).

The protein belongs to the Ninja family.

It localises to the nucleus. This chain is Ninja-family protein 3 (AFP-D1), found in Triticum aestivum (Wheat).